Here is a 511-residue protein sequence, read N- to C-terminus: Membrane-bound lytic murein transglycosylase F (511 aa).

An N-terminal signal peptide occupies residues 1–19 (MKKLKINYLLIGIVTLLLA). Residues 20–269 (AALWPSIPWS…RLEEKYLGHG (250 aa)) are non-LT domain. The LT domain stretch occupies residues 270–511 (NDFDYVDTRT…ARMKLPGHLY (242 aa)). The active site involves Glu314.

It in the N-terminal section; belongs to the bacterial solute-binding protein 3 family. This sequence in the C-terminal section; belongs to the transglycosylase Slt family.

The protein resides in the cell outer membrane. The catalysed reaction is Exolytic cleavage of the (1-&gt;4)-beta-glycosidic linkage between N-acetylmuramic acid (MurNAc) and N-acetylglucosamine (GlcNAc) residues in peptidoglycan, from either the reducing or the non-reducing ends of the peptidoglycan chains, with concomitant formation of a 1,6-anhydrobond in the MurNAc residue.. Functionally, murein-degrading enzyme that degrades murein glycan strands and insoluble, high-molecular weight murein sacculi, with the concomitant formation of a 1,6-anhydromuramoyl product. Lytic transglycosylases (LTs) play an integral role in the metabolism of the peptidoglycan (PG) sacculus. Their lytic action creates space within the PG sacculus to allow for its expansion as well as for the insertion of various structures such as secretion systems and flagella. In Klebsiella pneumoniae subsp. pneumoniae (strain ATCC 700721 / MGH 78578), this protein is Membrane-bound lytic murein transglycosylase F.